A 169-amino-acid polypeptide reads, in one-letter code: Large ribosomal subunit protein uL5 (169 aa).

Belongs to the universal ribosomal protein uL5 family. As to quaternary structure, part of the 50S ribosomal subunit; contacts the 5S rRNA and probably tRNA. Forms a bridge to the 30S subunit in the 70S ribosome.

This is one of the proteins that bind and probably mediate the attachment of the 5S RNA into the large ribosomal subunit, where it forms part of the central protuberance. In the 70S ribosome it contacts protein S13 of the 30S subunit (bridge B1b), connecting the 2 subunits; this bridge is implicated in subunit movement. May contact the P site tRNA; the 5S rRNA and some of its associated proteins might help stabilize positioning of ribosome-bound tRNAs. The polypeptide is Large ribosomal subunit protein uL5 (Cenarchaeum symbiosum (strain A)).